A 786-amino-acid polypeptide reads, in one-letter code: MLERTLRVLEYDKVKEQLLEHTASSLGRDKVKRLMPSTDFEEIVEMQDTTDEAAKVIRLKGHAPLGGIFDIRSNVKRAKIGSMLSPHELLDIASTMYGSRQMKRFIEDIVDNGAQLPILETHVAQIVSLYDLEKKITGCIGDGGEVLDSASDKLRGIRNQIRTAESRIREKLENMTRSSNAQKMLSDAIVTIRNDRYVIPVKQEYRGVYGGIVHDQSASGQTLFIEPQVIVELNNALQEARVKEKQEVERILMMLTEEVAAEADIVLANVEVIANLDFIFAKALYAKRMKATKPIVNNERYMELRQARHPLIDPKVIVPNDIVLGKDFTTIVITGPNTGGKTVTLKTVGICVLMAQSGLHIPVQEESEICVFKNIFADIGDEQSIEQSLSTFSSHMVNIVDILEKADFESLVLFDELGAGTDPQEGAALAISILDEVHNRGARVVATTHYPELKAYGYNRNQVINASVEFDVNTLSPTYKLLIGVPGRSNAFEISKRLGLSERVINRARNHISTDTNKIENMIAKLEESQKNAERDWKEAEELRKQSEKLHRELQRQIIEFNEERDERLLKAQKEGEEKVEAAKKEAEAIIRELRQLRKAQLANVKDHELIEAKSRLEGAAPELVKKQKVKVKNTAPKQQLRPGDEVKVLTFGQKGQLLKKVSDSEWNVQIGILKMKVKESDMEYINTPKQLEKKAVATVKGRDYHVSLELDLRGERFENAMMRVEKYLDDAQLANYPRVSIIHGKGTGALRQGVQDYLKNHRGVKSFRYGDMGEGGLGVTVVELK.

335-342 serves as a coordination point for ATP; the sequence is GPNTGGKT. In terms of domain architecture, Smr spans 711 to 786; it reads LDLRGERFEN…GLGVTVVELK (76 aa).

Belongs to the DNA mismatch repair MutS family. MutS2 subfamily. Homodimer. Binds to stalled ribosomes, contacting rRNA.

Functionally, endonuclease that is involved in the suppression of homologous recombination and thus may have a key role in the control of bacterial genetic diversity. In terms of biological role, acts as a ribosome collision sensor, splitting the ribosome into its 2 subunits. Detects stalled/collided 70S ribosomes which it binds and splits by an ATP-hydrolysis driven conformational change. Acts upstream of the ribosome quality control system (RQC), a ribosome-associated complex that mediates the extraction of incompletely synthesized nascent chains from stalled ribosomes and their subsequent degradation. Probably generates substrates for RQC. This Bacillus cytotoxicus (strain DSM 22905 / CIP 110041 / 391-98 / NVH 391-98) protein is Endonuclease MutS2.